The chain runs to 37 residues: Mastoparan-VT (37 aa).

Positions 1-22 (EALADPIADPVAGPNPEADPEA) are excised as a propeptide. 4 AXPX repeats span residues 4–7 (ADPI), 8–11 (ADPV), 12–15 (AGPN), and 18–21 (ADPE). At Leu-36 the chain carries Leucine amide.

The protein belongs to the MCD family. Mastoparan subfamily. Expressed by the venom gland.

Its subcellular location is the secreted. The protein resides in the target cell membrane. Its function is as follows. Antimicrobial peptide with potent activity against both Gram-positive (S.aureus MIC=50 ug/ml, and B.subtilis MIC=25 ug/ml) and Gram-negative bacteria (P.aeruginosa MIC=25 ug/ml, E.coli MIC=3-50 ug/ml, K.pneumoniae MIC=25 ug/ml). Exhibits little hemolytic activity on human erythrocytes. This is Mastoparan-VT from Vespa tropica (Greater banded hornet).